Reading from the N-terminus, the 180-residue chain is ATP-dependent protease subunit HslV (180 aa).

Thr-6 is a catalytic residue. Positions 164, 167, and 170 each coordinate Na(+).

This sequence belongs to the peptidase T1B family. HslV subfamily. As to quaternary structure, a double ring-shaped homohexamer of HslV is capped on each side by a ring-shaped HslU homohexamer. The assembly of the HslU/HslV complex is dependent on binding of ATP.

The protein localises to the cytoplasm. It catalyses the reaction ATP-dependent cleavage of peptide bonds with broad specificity.. With respect to regulation, allosterically activated by HslU binding. Functionally, protease subunit of a proteasome-like degradation complex believed to be a general protein degrading machinery. The sequence is that of ATP-dependent protease subunit HslV from Borrelia turicatae (strain 91E135).